Reading from the N-terminus, the 362-residue chain is Serine/threonine-protein kinase ZRK4 (362 aa).

The interval 1 to 23 (MNDQKMSCWRKKSKKKNSEANQR) is disordered. The 328-residue stretch at 35–362 (LEDLIELCNG…KELKRIERWT (328 aa)) folds into the Protein kinase domain. ATP contacts are provided by residues 41-49 (LCNGKSNPI) and Lys-89. Asp-185 (proton acceptor) is an active-site residue.

The protein belongs to the protein kinase superfamily. Ser/Thr protein kinase family. ZRK subfamily.

It catalyses the reaction L-seryl-[protein] + ATP = O-phospho-L-seryl-[protein] + ADP + H(+). It carries out the reaction L-threonyl-[protein] + ATP = O-phospho-L-threonyl-[protein] + ADP + H(+). The polypeptide is Serine/threonine-protein kinase ZRK4 (Arabidopsis thaliana (Mouse-ear cress)).